The primary structure comprises 89 residues: Large ribosomal subunit protein bL27 (89 aa).

Residues 1-26 (MAHKKAGGSSRNGRDSAGQRRGVKRF) are disordered.

This sequence belongs to the bacterial ribosomal protein bL27 family.

This is Large ribosomal subunit protein bL27 from Nitratidesulfovibrio vulgaris (strain DSM 19637 / Miyazaki F) (Desulfovibrio vulgaris).